A 217-amino-acid polypeptide reads, in one-letter code: Octanoyltransferase (217 aa).

The 176-residue stretch at 32–207 (SDSPDELWIV…TLSQLLGYQQ (176 aa)) folds into the BPL/LPL catalytic domain. Residues 71–78 (RGGQVTYH), 138–140 (SLG), and 151–153 (GLA) contribute to the substrate site. Cysteine 169 (acyl-thioester intermediate) is an active-site residue.

This sequence belongs to the LipB family.

It localises to the cytoplasm. The enzyme catalyses octanoyl-[ACP] + L-lysyl-[protein] = N(6)-octanoyl-L-lysyl-[protein] + holo-[ACP] + H(+). Its pathway is protein modification; protein lipoylation via endogenous pathway; protein N(6)-(lipoyl)lysine from octanoyl-[acyl-carrier-protein]: step 1/2. Catalyzes the transfer of endogenously produced octanoic acid from octanoyl-acyl-carrier-protein onto the lipoyl domains of lipoate-dependent enzymes. Lipoyl-ACP can also act as a substrate although octanoyl-ACP is likely to be the physiological substrate. This chain is Octanoyltransferase, found in Shewanella sp. (strain MR-7).